The sequence spans 540 residues: MAKKITFNEDARRGLERGLNTLADTVKVTLGPRGRNVVLEKKWGAPVITNDGVTIAKEIELDDPYEKIGAELVKEVAKKTDDVAGDGTTTSVVLAQAMVREGLKNVAAGADPISLRRGIEKSVAAVSKALLTSAKEVETEAEIAACASISAGDPQIGDIIAQALEKVGKEGVVTVEESNTFGTELEITEGMRFDKGYLSAYFVTDAERQETVFENPYILICDSKISSVKDLLPVVDKVIQSGKQLLIIAEDVDGEALATLVVNKIRGIFKSVAVKAPGFGDRRKMMLQDIAVLTGGQVISEEVGLKLENATLDLLGCARKVVVSKDETTIVDGAGSSDQIAGRVSQIRKELENSDSDYDREKLQERLAKLSGGVAVIRSGAATEVELKERKHRIEDAVRNAKAAVEEGIVAGGGAALLQSGTSALKDLQLTSEEAVGRNIVRSAIEAPLRQISLNAGLEPGVVVGKVSSLPQGHGLDASTGEYVDMLSRGISDPVKVTRSALENAASIAGLFLTTEAVVAEKPEPKPAPGPADPGAGMDF.

ATP is bound by residues 29-32 (TLGP), 86-90 (DGTTT), G413, and D493. A disordered region spans residues 520–540 (AEKPEPKPAPGPADPGAGMDF).

Belongs to the chaperonin (HSP60) family. In terms of assembly, forms a cylinder of 14 subunits composed of two heptameric rings stacked back-to-back. Interacts with the co-chaperonin GroES.

It is found in the cytoplasm. The catalysed reaction is ATP + H2O + a folded polypeptide = ADP + phosphate + an unfolded polypeptide.. Functionally, together with its co-chaperonin GroES, plays an essential role in assisting protein folding. The GroEL-GroES system forms a nano-cage that allows encapsulation of the non-native substrate proteins and provides a physical environment optimized to promote and accelerate protein folding. This Tropheryma whipplei (strain TW08/27) (Whipple's bacillus) protein is Chaperonin GroEL.